Here is a 523-residue protein sequence, read N- to C-terminus: 2-hydroxyisoflavanone synthase (523 aa).

A helical membrane pass occupies residues 2–22 (LVELAITLLVIALFIHLRPTP). Heme is bound at residue Cys-450.

The protein belongs to the cytochrome P450 family. The cofactor is heme.

The protein resides in the microsome membrane. It catalyses the reaction (2S)-liquiritigenin + reduced [NADPH--hemoprotein reductase] + O2 = (2R,3S)-2,4',7-trihydroxyisoflavanone + oxidized [NADPH--hemoprotein reductase] + H2O + H(+). It carries out the reaction (2S)-naringenin + reduced [NADPH--hemoprotein reductase] + O2 = 2-hydroxy-2,3-dihydrogenistein + oxidized [NADPH--hemoprotein reductase] + H2O + H(+). 2-hydroxyisoflavanone synthase, which catalyzes the hydroxylation associated with 1,2-aryl migration of flavanones. Converts liquiritigenin and naringenin into highly unstable precursors of the isoflavones daidzein and genistein. The sequence is that of 2-hydroxyisoflavanone synthase (CYP93C2) from Glycyrrhiza uralensis (Chinese licorice).